Here is a 660-residue protein sequence, read N- to C-terminus: Bifunctional polymyxin resistance protein ArnA (660 aa).

The segment at 1–304 is formyltransferase ArnAFT; the sequence is MKAVIFAYHD…TLGLVAGARL (304 aa). Residue His104 is the Proton donor; for formyltransferase activity of the active site. (6R)-10-formyltetrahydrofolate-binding positions include Arg114 and 136-140; that span reads VKRAD. Residues 314-660 form a dehydrogenase ArnADH region; sequence RRIRVLILGV…RSVDVAERAS (347 aa). Residues Asp347 and 368–369 contribute to the NAD(+) site; that span reads DI. UDP-alpha-D-glucuronate is bound by residues Ala393, Tyr398, and 432–433; that span reads TS. Glu434 acts as the Proton acceptor; for decarboxylase activity in catalysis. Residues Arg460, Asn492, 526-535, and Tyr613 contribute to the UDP-alpha-D-glucuronate site; that span reads KLIDGGQQKR. The active-site Proton donor; for decarboxylase activity is the Arg619.

This sequence in the N-terminal section; belongs to the Fmt family. UDP-L-Ara4N formyltransferase subfamily. It in the C-terminal section; belongs to the NAD(P)-dependent epimerase/dehydratase family. UDP-glucuronic acid decarboxylase subfamily. As to quaternary structure, homohexamer, formed by a dimer of trimers.

It carries out the reaction UDP-alpha-D-glucuronate + NAD(+) = UDP-beta-L-threo-pentopyranos-4-ulose + CO2 + NADH. It catalyses the reaction UDP-4-amino-4-deoxy-beta-L-arabinose + (6R)-10-formyltetrahydrofolate = UDP-4-deoxy-4-formamido-beta-L-arabinose + (6S)-5,6,7,8-tetrahydrofolate + H(+). Its pathway is nucleotide-sugar biosynthesis; UDP-4-deoxy-4-formamido-beta-L-arabinose biosynthesis; UDP-4-deoxy-4-formamido-beta-L-arabinose from UDP-alpha-D-glucuronate: step 1/3. It functions in the pathway nucleotide-sugar biosynthesis; UDP-4-deoxy-4-formamido-beta-L-arabinose biosynthesis; UDP-4-deoxy-4-formamido-beta-L-arabinose from UDP-alpha-D-glucuronate: step 3/3. The protein operates within bacterial outer membrane biogenesis; lipopolysaccharide biosynthesis. Bifunctional enzyme that catalyzes the oxidative decarboxylation of UDP-glucuronic acid (UDP-GlcUA) to UDP-4-keto-arabinose (UDP-Ara4O) and the addition of a formyl group to UDP-4-amino-4-deoxy-L-arabinose (UDP-L-Ara4N) to form UDP-L-4-formamido-arabinose (UDP-L-Ara4FN). The modified arabinose is attached to lipid A and is required for resistance to polymyxin and cationic antimicrobial peptides. The protein is Bifunctional polymyxin resistance protein ArnA of Salmonella enteritidis PT4 (strain P125109).